The chain runs to 316 residues: Thymidylate synthase (316 aa).

DUMP contacts are provided by residues Arg-23 and 178–179 (RR). Cys-198 acts as the Nucleophile in catalysis. Residues 218-221 (RSGD), Asn-229, and 259-261 (HIY) each bind dUMP. Asp-221 is a binding site for (6R)-5,10-methylene-5,6,7,8-tetrahydrofolate. Ala-315 is a binding site for (6R)-5,10-methylene-5,6,7,8-tetrahydrofolate.

Belongs to the thymidylate synthase family. Bacterial-type ThyA subfamily. In terms of assembly, homodimer.

The protein resides in the cytoplasm. The catalysed reaction is dUMP + (6R)-5,10-methylene-5,6,7,8-tetrahydrofolate = 7,8-dihydrofolate + dTMP. It functions in the pathway pyrimidine metabolism; dTTP biosynthesis. In terms of biological role, catalyzes the reductive methylation of 2'-deoxyuridine-5'-monophosphate (dUMP) to 2'-deoxythymidine-5'-monophosphate (dTMP) while utilizing 5,10-methylenetetrahydrofolate (mTHF) as the methyl donor and reductant in the reaction, yielding dihydrofolate (DHF) as a by-product. This enzymatic reaction provides an intracellular de novo source of dTMP, an essential precursor for DNA biosynthesis. The chain is Thymidylate synthase from Latilactobacillus sakei subsp. sakei (strain 23K) (Lactobacillus sakei subsp. sakei).